The primary structure comprises 103 residues: Enhancer of rudimentary homolog (103 aa).

Belongs to the E(R) family. As to quaternary structure, homodimer.

In terms of biological role, may have a role in the cell cycle. In Aedes aegypti (Yellowfever mosquito), this protein is Enhancer of rudimentary homolog.